We begin with the raw amino-acid sequence, 535 residues long: Dimethylaniline monooxygenase [N-oxide-forming] 2 (535 aa).

Residue alanine 2 is modified to N-acetylalanine. FAD is bound by residues 9–13, glutamate 32, 40–41, and 61–62; these read GAGVS, VW, and NT. NADP(+)-binding positions include 60–61 and 195–198; these read TN and SGSD. Residue lysine 492 forms a Glycyl lysine isopeptide (Lys-Gly) (interchain with G-Cter in SUMO) linkage. A helical transmembrane segment spans residues 510-530; it reads FPVSFLLKILGLVAVVVAFFC.

The protein belongs to the FMO family. The cofactor is FAD. It depends on Mg(2+) as a cofactor.

It localises to the microsome membrane. Its subcellular location is the endoplasmic reticulum membrane. It catalyses the reaction N,N-dimethylaniline + NADPH + O2 + H(+) = N,N-dimethylaniline N-oxide + NADP(+) + H2O. In terms of biological role, catalyzes the oxidative metabolism of numerous xenobiotics, including mainly therapeutic drugs and insecticides that contain a soft nucleophile, most commonly nitrogen and sulfur and participates to their bioactivation. This chain is Dimethylaniline monooxygenase [N-oxide-forming] 2, found in Macaca mulatta (Rhesus macaque).